Consider the following 232-residue polypeptide: Nuclear transcription factor Y subunit nfyc-1 (232 aa).

The interval 191-232 is disordered; that stretch reads TVPTTSTNGPGHMSEDSFQDPNMHSDFHQRTSNSSVNRSHHN. The segment covering 220–232 has biased composition (polar residues); that stretch reads RTSNSSVNRSHHN.

Belongs to the NFYC/HAP5 subunit family. As to quaternary structure, forms two NF-Y heterotrimeric transcription factor complexes: the nfya-1-NF-Y complex is composed of nfya-1, nfyb-1 and nfyc-1, and the nfya-2-NF-Y complex is composed of nfya-2, nfyb-1 and nfyc-1. Interacts with nfyb-1; the interaction is direct and is required for the interaction with either nfya-1 or nfya-2, and subsequent binding of the complex to the 5'-CCAAT-3' box motif in DNA. Expressed in certain parts of the gonads with high expression in fertilized oocytes in the uterus and mature oocytes from the distal to the proximal arm of the gonad, but weak expression in the syncytial ovaries and immature oocytes at the beginning of the proximal arm of the gonad. Expressed in the excretory cell, secretory cells in the pharyngeal terminal bulb wall, in the small ganglia surrounding the pharynx and in the neurons running anteriorly to the sensory organs in the head. Not expressed in the intestine, the hypodermis or body wall muscle surrounding the pseudocoelomic space.

The protein localises to the nucleus. Its subcellular location is the cytoplasm. The protein resides in the perikaryon. In terms of biological role, component of sequence-specific heterotrimeric transcription factor (nfya-1-NF-Y and nfya-2-NF-Y) complexes which specifically recognize a 5'-CCAAT-3' box motif found in the promoters of its target genes to regulate their expression and control cellular identity in particular tissue types. In association with the components in the NF-Y complexes, represses the expression of the T-box transcription factor tbx-2 throughout larval development, which most likely restricts its expression to certain tissues. May act to repress txb-2 expression in conjunction with tbx-2 itself, which has an autoregulatory role. In association with the components in the nfya-1-NF-Y complex, negatively regulates the expression of the homeobox protein egl-5 to spatially restrict its expression in tissues such as the head. May regulate egl-5 expression in association with the mes-2-mes-3-mes-6 complex. The protein is Nuclear transcription factor Y subunit nfyc-1 of Caenorhabditis elegans.